A 253-amino-acid polypeptide reads, in one-letter code: Sulfate transporter CysZ (253 aa).

4 consecutive transmembrane segments (helical) span residues 31-51, 75-95, 151-171, and 222-242; these read FVIL…WWLF, LLWP…FSTI, IVLL…PVLW, and IPLL…AMWV.

This sequence belongs to the CysZ family.

Its subcellular location is the cell inner membrane. In terms of biological role, high affinity, high specificity proton-dependent sulfate transporter, which mediates sulfate uptake. Provides the sulfur source for the cysteine synthesis pathway. The polypeptide is Sulfate transporter CysZ (Escherichia coli O81 (strain ED1a)).